Here is a 236-residue protein sequence, read N- to C-terminus: MPAYKRVLLKLSGEALMGDDAFGINRATIEGMVNDIAEIVKLGVQVAVVIGGGNIFRGVAGGAAGMDRATADYMGMLATMMNALALQDAMRHANIEGRVQSALRMDQVVEPYIRPRAIRQLEEGKVVIFAAGTGNPFFTTDTAAALRGAEIGAEIVLKATKVDGVYTADPKKDPSATRYTTITFDEAISRNLQVMDATAFALCRDQKLPIKVFSIVKPGALKRVVLGEDEGTLVHV.

10–13 (KLSG) contributes to the ATP binding site. Residue Gly-52 coordinates UMP. ATP-binding residues include Gly-53 and Arg-57. UMP contacts are provided by residues Asp-72 and 133–140 (TGNPFFTT). ATP-binding residues include Thr-160, Tyr-166, and Asp-169.

The protein belongs to the UMP kinase family. In terms of assembly, homohexamer.

The protein resides in the cytoplasm. It carries out the reaction UMP + ATP = UDP + ADP. The protein operates within pyrimidine metabolism; CTP biosynthesis via de novo pathway; UDP from UMP (UMPK route): step 1/1. Its activity is regulated as follows. Inhibited by UTP. Functionally, catalyzes the reversible phosphorylation of UMP to UDP. The chain is Uridylate kinase from Cupriavidus pinatubonensis (strain JMP 134 / LMG 1197) (Cupriavidus necator (strain JMP 134)).